The primary structure comprises 675 residues: Heat shock 70 kDa protein 12A (675 aa).

The disordered stretch occupies residues 1–45 (MADKEAGGGDAGPRETAPTSTYSSPARSLGDTGITPLSPSHILND). Position 2 is an N-acetylalanine (alanine 2). Residues 17 to 26 (APTSTYSSPA) show a composition bias toward polar residues.

This sequence belongs to the heat shock protein 70 family. As to quaternary structure, interacts with SORL1 (via cytosolic C-terminus); this interaction affects SORL1 internalization and subcellular localization. In terms of tissue distribution, expressed most strongly in brain, kidney and heart with little or no expression in other tissues. In the brain, expressed in glial cells, including astrocytes (at protein level). In the aorta, preferentially expressed in lesions.

It localises to the cytoplasm. It is found in the nucleus. Its function is as follows. Adapter protein for SORL1, but not SORT1. Delays SORL1 internalization and affects SORL1 subcellular localization. In Mus musculus (Mouse), this protein is Heat shock 70 kDa protein 12A (Hspa12a).